The primary structure comprises 189 residues: Interferon alpha-4 (189 aa).

Residues Met-1 to Gly-23 form the signal peptide. 2 disulfides stabilise this stretch: Cys-24/Cys-122 and Cys-52/Cys-162.

The protein belongs to the alpha/beta interferon family.

Its subcellular location is the secreted. Functionally, produced by macrophages, IFN-alpha have antiviral activities. Interferon stimulates the production of two enzymes: a protein kinase and an oligoadenylate synthetase. The sequence is that of Interferon alpha-4 (IFNA4) from Homo sapiens (Human).